The chain runs to 221 residues: Large ribosomal subunit protein uL16y (221 aa).

This sequence belongs to the universal ribosomal protein uL16 family. Component of the small ribosomal subunit. Mature ribosomes consist of a small (40S) and a large (60S) subunit. The 40S subunit contains about 33 different proteins and 1 molecule of RNA (18S). The 60S subunit contains about 49 different proteins and 3 molecules of RNA (25S, 5.8S and 5S).

In Arabidopsis thaliana (Mouse-ear cress), this protein is Large ribosomal subunit protein uL16y (RPL10B).